A 292-amino-acid polypeptide reads, in one-letter code: Elongation factor Ts (292 aa).

The tract at residues 80 to 83 (TDFV) is involved in Mg(2+) ion dislocation from EF-Tu.

This sequence belongs to the EF-Ts family.

It is found in the cytoplasm. Associates with the EF-Tu.GDP complex and induces the exchange of GDP to GTP. It remains bound to the aminoacyl-tRNA.EF-Tu.GTP complex up to the GTP hydrolysis stage on the ribosome. This is Elongation factor Ts from Mycoplasmopsis synoviae (strain 53) (Mycoplasma synoviae).